A 492-amino-acid polypeptide reads, in one-letter code: Cysteine--tRNA ligase (492 aa).

Position 31 (C31) interacts with Zn(2+). The 'HIGH' region motif lies at 33–43 (PTVYGDPHLGH). Residues C226, H251, and E255 each coordinate Zn(2+). The 'KMSKS' region signature appears at 283–287 (KMGKS). Residue K286 coordinates ATP.

It belongs to the class-I aminoacyl-tRNA synthetase family. In terms of assembly, monomer. Requires Zn(2+) as cofactor.

The protein localises to the cytoplasm. It carries out the reaction tRNA(Cys) + L-cysteine + ATP = L-cysteinyl-tRNA(Cys) + AMP + diphosphate. In Azobacteroides pseudotrichonymphae genomovar. CFP2, this protein is Cysteine--tRNA ligase.